The following is a 361-amino-acid chain: (S)-coclaurine N-methyltransferase (361 aa).

S-adenosyl-L-methionine-binding residues include Ser-101, Gly-139, Asn-163, Gln-167, Asp-189, Ile-190, and Val-205. The active site involves Cys-336.

It belongs to the CFA/CMAS family. As to quaternary structure, homodimer. As to expression, highly expressed in rhizomes. Detected in roots, petioles, flower buds and leaves. Expressed between the developing stele and ground tissues near the root apical meristem, in the immature endodermis, the pericycle and the spokes of developing xylem in the apical region of the root and in the protoderm of leaf primordia in rhizomes.

It is found in the cytoplasm. It carries out the reaction norreticuline + S-adenosyl-L-methionine = reticuline + S-adenosyl-L-homocysteine + H(+). It catalyses the reaction (S)-coclaurine + S-adenosyl-L-methionine = (S)-N-methylcoclaurine + S-adenosyl-L-homocysteine + H(+). The catalysed reaction is heliamine + S-adenosyl-L-methionine = N-methylheliamine + S-adenosyl-L-homocysteine + H(+). It participates in alkaloid biosynthesis. Involved in the biosynthesis of protoberberine alkaloids. N-methyltransferase with a substrate preference for (R,S)-norreticuline but also active with dimethoxytetrahydroisoquinoline. The protein is (S)-coclaurine N-methyltransferase of Thalictrum flavum subsp. glaucum (Yellow meadow rue).